Here is a 554-residue protein sequence, read N- to C-terminus: Glutamine--tRNA ligase (554 aa).

The 'HIGH' region signature appears at 34–44 (PEPNGYLHIGH). Residues 35–37 (EPN) and 41–47 (HIGHAKS) each bind ATP. L-glutamine-binding residues include D67 and Y212. ATP-binding positions include T231, 261-262 (RL), and 269-271 (MSK). The 'KMSKS' region motif lies at 268–272 (VMSKR). The segment at 317–324 (TKQDNTIE) is interaction with tRNA.

The protein belongs to the class-I aminoacyl-tRNA synthetase family. As to quaternary structure, monomer.

The protein localises to the cytoplasm. The enzyme catalyses tRNA(Gln) + L-glutamine + ATP = L-glutaminyl-tRNA(Gln) + AMP + diphosphate. This is Glutamine--tRNA ligase from Escherichia coli (strain 55989 / EAEC).